A 202-amino-acid chain; its full sequence is ATP-dependent Clp protease proteolytic subunit 1 (202 aa).

Ser-99 (nucleophile) is an active-site residue. His-123 is a catalytic residue.

The protein belongs to the peptidase S14 family. As to quaternary structure, fourteen ClpP subunits assemble into 2 heptameric rings which stack back to back to give a disk-like structure with a central cavity, resembling the structure of eukaryotic proteasomes.

The protein resides in the cytoplasm. It catalyses the reaction Hydrolysis of proteins to small peptides in the presence of ATP and magnesium. alpha-casein is the usual test substrate. In the absence of ATP, only oligopeptides shorter than five residues are hydrolyzed (such as succinyl-Leu-Tyr-|-NHMec, and Leu-Tyr-Leu-|-Tyr-Trp, in which cleavage of the -Tyr-|-Leu- and -Tyr-|-Trp bonds also occurs).. Its function is as follows. Cleaves peptides in various proteins in a process that requires ATP hydrolysis. Has a chymotrypsin-like activity. Plays a major role in the degradation of misfolded proteins. The sequence is that of ATP-dependent Clp protease proteolytic subunit 1 from Symbiobacterium thermophilum (strain DSM 24528 / JCM 14929 / IAM 14863 / T).